A 90-amino-acid chain; its full sequence is Small ribosomal subunit protein bS16 (90 aa).

The protein belongs to the bacterial ribosomal protein bS16 family.

This is Small ribosomal subunit protein bS16 from Bacillus licheniformis (strain ATCC 14580 / DSM 13 / JCM 2505 / CCUG 7422 / NBRC 12200 / NCIMB 9375 / NCTC 10341 / NRRL NRS-1264 / Gibson 46).